The following is a 141-amino-acid chain: Meiotically up-regulated gene 118 protein (141 aa).

Positions 106-115 (LSSQKSARQP) are enriched in polar residues. Residues 106–141 (LSSQKSARQPTKTVASSSSSSSKSTTVSKSSSKSQV) form a disordered region. Over residues 116-141 (TKTVASSSSSSSKSTTVSKSSSKSQV) the composition is skewed to low complexity.

The protein localises to the nucleus. Has a role in meiosis. The chain is Meiotically up-regulated gene 118 protein (mug118) from Schizosaccharomyces pombe (strain 972 / ATCC 24843) (Fission yeast).